A 570-amino-acid polypeptide reads, in one-letter code: Small ribosomal subunit protein bS1 (570 aa).

S1 motif domains are found at residues 52-116, 134-199, 220-288, 305-375, 392-462, and 479-548; these read GAIL…LSRE, GSIV…VSRR, GERR…LGLK, GKRV…LGLK, GLRV…LGVK, and GSDI…LSIK.

It belongs to the bacterial ribosomal protein bS1 family.

Binds mRNA; thus facilitating recognition of the initiation point. It is needed to translate mRNA with a short Shine-Dalgarno (SD) purine-rich sequence. The polypeptide is Small ribosomal subunit protein bS1 (rpsA) (Chlamydia muridarum (strain MoPn / Nigg)).